The primary structure comprises 216 residues: Small ribosomal subunit protein uS3c (216 aa).

In terms of domain architecture, KH type-2 spans 43 to 118 (INNYVKKNMR…KLNITITRIE (76 aa)).

It belongs to the universal ribosomal protein uS3 family. In terms of assembly, part of the 30S ribosomal subunit.

It localises to the plastid. This chain is Small ribosomal subunit protein uS3c (rps3), found in Cuscuta reflexa (Southern Asian dodder).